We begin with the raw amino-acid sequence, 576 residues long: Arginine--tRNA ligase (576 aa).

A 'HIGH' region motif is present at residues 126–136 (ANPTGPMHIGH).

The protein belongs to the class-I aminoacyl-tRNA synthetase family. Monomer.

It localises to the cytoplasm. It catalyses the reaction tRNA(Arg) + L-arginine + ATP = L-arginyl-tRNA(Arg) + AMP + diphosphate. The protein is Arginine--tRNA ligase of Rickettsia peacockii (strain Rustic).